The following is a 266-amino-acid chain: Vesicle-associated protein 4-1 (266 aa).

Residues 28 to 57 (STTSSSSTQNPNQNYRSRHGNRNTDISAVS) are disordered. Residues 76–199 (RLRLDPSSYL…VEQVLRVIFI (124 aa)) form the MSP domain. A coiled-coil region spans residues 200–228 (DADRPSAALEKLKRQLDEAEAAVEARKKP). Positions 219 to 229 (EAAVEARKKPP) are enriched in basic and acidic residues. The tract at residues 219-239 (EAAVEARKKPPPETGPRVVGE) is disordered. Position 264 is a phosphoserine (Ser264).

The protein belongs to the VAMP-associated protein (VAP) (TC 9.B.17) family.

May play a role in vesicle trafficking. In Arabidopsis thaliana (Mouse-ear cress), this protein is Vesicle-associated protein 4-1 (PVA41).